Consider the following 174-residue polypeptide: Inner membrane protein p22 (174 aa).

Topologically, residues 1–7 (MLHIKMT) are intravirion. A helical membrane pass occupies residues 8–28 (ISTLLIALIVLLIIILVVFLY). The Virion surface portion of the chain corresponds to 29–174 (HKKQQPPKKV…LYLPRNHKYA (146 aa)).

It belongs to the asfivirus inner membrane protein p22 family.

It is found in the virion membrane. It localises to the host cell membrane. The sequence is that of Inner membrane protein p22 from African swine fever virus (isolate Pig/Kenya/KEN-50/1950) (ASFV).